We begin with the raw amino-acid sequence, 889 residues long: Translation initiation factor IF-2 (889 aa).

The interval 1–299 is disordered; that stretch reads MTDNKDDKTL…EKFKRSQMQE (299 aa). Positions 61–76 are enriched in low complexity; the sequence is ITPVAATPAARPAEQR. Residues 77–93 are compositionally biased toward pro residues; it reads PMPPQPSGRPAPQPQPH. Residues 116–182 show a composition bias toward basic and acidic residues; sequence MEARRRALAE…EAEKTEEKVE (67 aa). The span at 196–215 shows a compositional bias: low complexity; the sequence is RPQPGRAAPAATPAAPDGAA. The segment covering 220–231 has biased composition (basic and acidic residues); it reads RGTESEEDERRR. The tr-type G domain maps to 387–554; sequence SRPPIVTIMG…AILLQSEILD (168 aa). Residues 396–403 are G1; that stretch reads GHVDHGKT. 396 to 403 provides a ligand contact to GTP; sequence GHVDHGKT. Residues 421-425 are G2; sequence GITQH. The segment at 442–445 is G3; sequence DTPG. GTP-binding positions include 442-446 and 496-499; these read DTPGH and NKID. A G4 region spans residues 496–499; sequence NKID. The segment at 532-534 is G5; that stretch reads SAK.

This sequence belongs to the TRAFAC class translation factor GTPase superfamily. Classic translation factor GTPase family. IF-2 subfamily.

Its subcellular location is the cytoplasm. One of the essential components for the initiation of protein synthesis. Protects formylmethionyl-tRNA from spontaneous hydrolysis and promotes its binding to the 30S ribosomal subunits. Also involved in the hydrolysis of GTP during the formation of the 70S ribosomal complex. In Rhizobium meliloti (strain 1021) (Ensifer meliloti), this protein is Translation initiation factor IF-2.